The primary structure comprises 316 residues: Ribosomal RNA small subunit methyltransferase H (316 aa).

S-adenosyl-L-methionine-binding positions include A35–H37, D55, F84, D105, and Q112.

It belongs to the methyltransferase superfamily. RsmH family.

The protein localises to the cytoplasm. The enzyme catalyses cytidine(1402) in 16S rRNA + S-adenosyl-L-methionine = N(4)-methylcytidine(1402) in 16S rRNA + S-adenosyl-L-homocysteine + H(+). Specifically methylates the N4 position of cytidine in position 1402 (C1402) of 16S rRNA. The protein is Ribosomal RNA small subunit methyltransferase H of Streptococcus sanguinis (strain SK36).